The chain runs to 58 residues: Small ribosomal subunit protein eS30 (58 aa).

The segment at 1-58 is disordered; that stretch reads MGKVHGSLARAGKVKNQTPKVPKLDKKKRLTGRAKKRQLYNRRFSDNGGRKKGPNSKA. The span at 25–40 shows a compositional bias: basic residues; it reads DKKKRLTGRAKKRQLY.

It belongs to the eukaryotic ribosomal protein eS30 family. As to quaternary structure, component of the small ribosomal subunit. Mature ribosomes consist of a small (40S) and a large (60S) subunit. The 40S subunit contains about 32 different proteins and 1 molecule of RNA (18S). The 60S subunit contains about 42 different proteins and 3 molecules of RNA (28S, 5.8S and 5S).

Its subcellular location is the cytoplasm. In terms of biological role, component of the ribosome, a large ribonucleoprotein complex responsible for the synthesis of proteins in the cell. The small ribosomal subunit (SSU) binds messenger RNAs (mRNAs) and translates the encoded message by selecting cognate aminoacyl-transfer RNA (tRNA) molecules. The large subunit (LSU) contains the ribosomal catalytic site termed the peptidyl transferase center (PTC), which catalyzes the formation of peptide bonds, thereby polymerizing the amino acids delivered by tRNAs into a polypeptide chain. The nascent polypeptides leave the ribosome through a tunnel in the LSU and interact with protein factors that function in enzymatic processing, targeting, and the membrane insertion of nascent chains at the exit of the ribosomal tunnel. The protein is Small ribosomal subunit protein eS30 of Plasmodium falciparum (isolate 3D7).